The primary structure comprises 351 residues: Glycerol-1-phosphate dehydrogenase [NAD(P)+] (351 aa).

Residues 97-101 and 119-122 each bind NAD(+); these read GKVID and TSPS. Substrate is bound at residue Asp-124. Ser-128 contacts NAD(+). Residue Asp-171 participates in substrate binding. Residues Asp-171 and His-251 each coordinate Zn(2+). His-255 serves as a coordination point for substrate. His-267 contacts Zn(2+).

The protein belongs to the glycerol-1-phosphate dehydrogenase family. Homodimer. Zn(2+) serves as cofactor.

The protein localises to the cytoplasm. The enzyme catalyses sn-glycerol 1-phosphate + NAD(+) = dihydroxyacetone phosphate + NADH + H(+). It carries out the reaction sn-glycerol 1-phosphate + NADP(+) = dihydroxyacetone phosphate + NADPH + H(+). It functions in the pathway membrane lipid metabolism; glycerophospholipid metabolism. Functionally, catalyzes the NAD(P)H-dependent reduction of dihydroxyacetonephosphate (DHAP or glycerone phosphate) to glycerol 1-phosphate (G1P). The G1P thus generated is used as the glycerophosphate backbone of phospholipids in the cellular membranes of Archaea. This Saccharolobus islandicus (strain M.16.27) (Sulfolobus islandicus) protein is Glycerol-1-phosphate dehydrogenase [NAD(P)+].